The following is a 663-amino-acid chain: Translation factor guf1, mitochondrial (663 aa).

The transit peptide at 1-51 (MRGCLQVLRWLSTSTARRPVSSRPLHEIFPKSEFRRPFTSTILRQAQASRN) directs the protein to the mitochondrion. The tr-type G domain maps to 65–245 (ERFRNFCIVA…TVIERIPAPV (181 aa)). Residues 74 to 81 (AHVDHGKS), 138 to 142 (DTPGH), and 192 to 195 (NKVD) contribute to the GTP site.

This sequence belongs to the TRAFAC class translation factor GTPase superfamily. Classic translation factor GTPase family. LepA subfamily.

It is found in the mitochondrion inner membrane. It carries out the reaction GTP + H2O = GDP + phosphate + H(+). Promotes mitochondrial protein synthesis. May act as a fidelity factor of the translation reaction, by catalyzing a one-codon backward translocation of tRNAs on improperly translocated ribosomes. Binds to mitochondrial ribosomes in a GTP-dependent manner. The sequence is that of Translation factor guf1, mitochondrial (guf1) from Talaromyces marneffei (strain ATCC 18224 / CBS 334.59 / QM 7333) (Penicillium marneffei).